We begin with the raw amino-acid sequence, 98 residues long: Integration host factor subunit alpha (98 aa).

Residues 54-74 (LRDKASRPGRNPKTGENIPVS) are disordered.

The protein belongs to the bacterial histone-like protein family. Heterodimer of an alpha and a beta chain.

Functionally, this protein is one of the two subunits of integration host factor, a specific DNA-binding protein that functions in genetic recombination as well as in transcriptional and translational control. The sequence is that of Integration host factor subunit alpha from Actinobacillus succinogenes (strain ATCC 55618 / DSM 22257 / CCUG 43843 / 130Z).